The primary structure comprises 330 residues: Growth hormone-regulated TBC protein 6 (330 aa).

The region spanning 78–256 is the Rab-GAP TBC domain; that stretch reads GIPHTFRKEL…RLWDCLIYEG (179 aa).

In Caenorhabditis elegans, this protein is Growth hormone-regulated TBC protein 6 (tbc-6).